We begin with the raw amino-acid sequence, 216 residues long: Somatotropin (216 aa).

A signal peptide spans 1 to 26; it reads MAAGSWTAGLLAFALLCLPWPQEASA. Zn(2+) is bound at residue His-45. Cys-78 and Cys-189 are oxidised to a cystine. At Ser-131 the chain carries Phosphoserine. Glu-198 lines the Zn(2+) pocket. Cys-206 and Cys-214 are joined by a disulfide.

The protein belongs to the somatotropin/prolactin family.

It localises to the secreted. Its function is as follows. Plays an important role in growth control. Its major role in stimulating body growth is to stimulate the liver and other tissues to secrete IGF1. It stimulates both the differentiation and proliferation of myoblasts. It also stimulates amino acid uptake and protein synthesis in muscle and other tissues. The sequence is that of Somatotropin (GH1) from Oryctolagus cuniculus (Rabbit).